A 211-amino-acid chain; its full sequence is BAG family molecular chaperone regulator 2 (211 aa).

Residue Ala-2 is modified to N-acetylalanine. A phosphoserine mark is found at Ser-20, Ser-31, and Ser-73. The stretch at 20–61 forms a coiled coil; it reads SMADRSSRLLESLDQLELRVEALREAATAVEQEKEVLLEMIH. The 81-residue stretch at 109 to 189 folds into the BAG domain; it reads SLKHATRIID…NIENADKAIK (81 aa).

As to quaternary structure, binds to the ATPase domain of HSP/HSC70 chaperones. May interact with NWD1. Interacts with HSPA1A (via NBD), HSPA1B (via NBD) and HSPA8. May interact with DNJC9; the interaction seems to be histone-dependent.

Functionally, co-chaperone for HSP70 and HSC70 chaperone proteins. Acts as a nucleotide-exchange factor (NEF) promoting the release of ADP from the HSP70 and HSC70 proteins thereby triggering client/substrate protein release. The sequence is that of BAG family molecular chaperone regulator 2 from Bos taurus (Bovine).